Consider the following 179-residue polypeptide: Ribosome maturation factor RimM (179 aa).

A PRC barrel domain is found at 102–179 (DGEYYWYQLE…EMKVEWDADF (78 aa)).

The protein belongs to the RimM family. As to quaternary structure, binds ribosomal protein uS19.

It localises to the cytoplasm. Functionally, an accessory protein needed during the final step in the assembly of 30S ribosomal subunit, possibly for assembly of the head region. Essential for efficient processing of 16S rRNA. May be needed both before and after RbfA during the maturation of 16S rRNA. It has affinity for free ribosomal 30S subunits but not for 70S ribosomes. The chain is Ribosome maturation factor RimM from Pseudomonas syringae pv. tomato (strain ATCC BAA-871 / DC3000).